We begin with the raw amino-acid sequence, 189 residues long: GTPase HRas (189 aa).

Residue 10–17 (GARGVGKS) participates in GTP binding. An Effector region motif is present at residues 32-40 (YDPTIEDSY). Residues 57–61 (DTAGQ) and 116–119 (NKCD) contribute to the GTP site. S-palmitoyl cysteine; by host attachment occurs at residues Cys181 and Cys184. A Cysteine methyl ester; by host modification is found at Cys186. Cys186 carries S-farnesyl cysteine; by host lipidation. The propeptide at 187-189 (VLS) is removed in mature form.

It belongs to the small GTPase superfamily. Ras family.

Its subcellular location is the host cell membrane. It catalyses the reaction GTP + H2O = GDP + phosphate + H(+). With respect to regulation, alternates between an inactive form bound to GDP and an active form bound to GTP. Activated by a guanine nucleotide-exchange factor (GEF) and inactivated by a GTPase-activating protein (GAP). This Mus musculus (Mouse) protein is GTPase HRas (H-RAS).